The following is a 45-amino-acid chain: Large ribosomal subunit protein bL34 (45 aa).

Belongs to the bacterial ribosomal protein bL34 family.

The chain is Large ribosomal subunit protein bL34 from Acidothermus cellulolyticus (strain ATCC 43068 / DSM 8971 / 11B).